Consider the following 216-residue polypeptide: Sarcospan (216 aa).

Over 1–26 the chain is Cytoplasmic; the sequence is MGRKPSPRAQELPEEEARTCCGCRFP. The helical transmembrane segment at 27-47 threads the bilayer; that stretch reads LLLALLQLALGIAVTVLGFLM. Topologically, residues 48-59 are extracellular; that stretch reads ASISPSLLVRDT. A helical transmembrane segment spans residues 60–80; that stretch reads PFWAGSIVCVVAYLGLFMLCV. Topologically, residues 81–95 are cytoplasmic; sequence SYQVDERTCVQFSMK. A helical membrane pass occupies residues 96–116; it reads VFYFLLSALGLMVCMLAVAFA. The Extracellular segment spans residues 117 to 166; sequence AHHYSLLAQFTCETSLDSCQCKLPSSEPLSRAFVYRDVTDCTSVTGTFKL. Residues 167–187 form a helical membrane-spanning segment; the sequence is FLIIQMVLNLVCGLVCLLACF. Residues 188–216 are Cytoplasmic-facing; that stretch reads VMWKHRYQVFYVGVGLRSLMASDGQLPKA.

The protein resides in the cell membrane. The protein localises to the sarcolemma. Its subcellular location is the postsynaptic cell membrane. Its function is as follows. Component of the dystrophin-glycoprotein complex (DGC), a complex that spans the muscle plasma membrane and forms a link between the F-actin cytoskeleton and the extracellular matrix. Preferentially associates with the sarcoglycan subcomplex of the DGC. This is Sarcospan (Sspn) from Mus musculus (Mouse).